Reading from the N-terminus, the 197-residue chain is Fucoxanthin-chlorophyll a-c binding protein E, chloroplastic (197 aa).

The transit peptide at Met1–Met31 directs the protein to the chloroplast. 3 consecutive transmembrane segments (helical) span residues Ile73–Ile94, Ile114–Met134, and Gly174–Pro196.

It belongs to the fucoxanthin chlorophyll protein family. The LHC complex of chromophytic algae is composed of fucoxanthin, chlorophyll A and C bound non-covalently by fucoxanthin chlorophyll proteins (FCPs). The ratio of the pigments in LHC; fucoxanthin: chlorophyll C: chlorophyll A; (0.6-1): (0.1-0.3): (1).

It is found in the plastid. The protein resides in the chloroplast thylakoid membrane. Its function is as follows. The light-harvesting complex (LHC) functions as a light receptor, it captures and delivers excitation energy to photosystems with which it is closely associated. Energy is transferred from the carotenoid and chlorophyll C (or B) to chlorophyll A and the photosynthetic reaction centers where it is used to synthesize ATP and reducing power. This Phaeodactylum tricornutum (Diatom) protein is Fucoxanthin-chlorophyll a-c binding protein E, chloroplastic (FCPE).